The chain runs to 208 residues: Thymidylate kinase (208 aa).

Residue 11–18 coordinates ATP; it reads GGEGVGKS.

This sequence belongs to the thymidylate kinase family.

It carries out the reaction dTMP + ATP = dTDP + ADP. Functionally, phosphorylation of dTMP to form dTDP in both de novo and salvage pathways of dTTP synthesis. The protein is Thymidylate kinase of Methylococcus capsulatus (strain ATCC 33009 / NCIMB 11132 / Bath).